We begin with the raw amino-acid sequence, 248 residues long: Type III pantothenate kinase (248 aa).

6-13 (ELGNSQLK) is an ATP binding site. Substrate contacts are provided by residues tyrosine 94 and 101–104 (GVDR). The active-site Proton acceptor is the aspartate 103. Residue aspartate 123 participates in K(+) binding. Threonine 126 serves as a coordination point for ATP. Threonine 179 contributes to the substrate binding site.

It belongs to the type III pantothenate kinase family. Homodimer. NH4(+) is required as a cofactor. The cofactor is K(+).

The protein localises to the cytoplasm. It catalyses the reaction (R)-pantothenate + ATP = (R)-4'-phosphopantothenate + ADP + H(+). It functions in the pathway cofactor biosynthesis; coenzyme A biosynthesis; CoA from (R)-pantothenate: step 1/5. In terms of biological role, catalyzes the phosphorylation of pantothenate (Pan), the first step in CoA biosynthesis. In Hydrogenovibrio crunogenus (strain DSM 25203 / XCL-2) (Thiomicrospira crunogena), this protein is Type III pantothenate kinase.